The chain runs to 144 residues: Nucleoside diphosphate kinase (144 aa).

ATP is bound by residues Lys11, Phe59, Arg87, Thr93, Arg104, and Asn114. The active-site Pros-phosphohistidine intermediate is His117.

It belongs to the NDK family. As to quaternary structure, homotetramer. The cofactor is Mg(2+).

It localises to the cytoplasm. The catalysed reaction is a 2'-deoxyribonucleoside 5'-diphosphate + ATP = a 2'-deoxyribonucleoside 5'-triphosphate + ADP. It catalyses the reaction a ribonucleoside 5'-diphosphate + ATP = a ribonucleoside 5'-triphosphate + ADP. Major role in the synthesis of nucleoside triphosphates other than ATP. The ATP gamma phosphate is transferred to the NDP beta phosphate via a ping-pong mechanism, using a phosphorylated active-site intermediate. This is Nucleoside diphosphate kinase from Coxiella burnetii (strain CbuG_Q212) (Coxiella burnetii (strain Q212)).